An 888-amino-acid polypeptide reads, in one-letter code: Dilute domain-containing protein YPR089W (888 aa).

The Dilute domain occupies 360–745; that stretch reads DIVLQSYWLS…KKFLNNKIKD (386 aa). 3 disordered regions span residues 462–504, 805–827, and 865–888; these read KEQQ…NNSS, KQRQ…TGDE, and LNIP…QNPW. Composition is skewed to polar residues over residues 809–823 and 867–880; these read NEPQ…TSDF and IPSS…WSNN.

The protein resides in the golgi apparatus. The polypeptide is Dilute domain-containing protein YPR089W (Saccharomyces cerevisiae (strain ATCC 204508 / S288c) (Baker's yeast)).